The chain runs to 519 residues: Voltage-gated potassium channel regulatory subunit KCNG4 (519 aa).

The disordered stretch occupies residues 1–25 (MPMPSRDGGLHPRHHHYGSHSPWSQ). The Cytoplasmic segment spans residues 1-218 (MPMPSRDGGL…EMVENPQSGL (218 aa)). Residues 219-240 (PGKVFACLSILFVATTAVSLCV) form a helical membrane-spanning segment. Residues 241–261 (STMPDLRAEEDQGECSRKCYY) lie on the Extracellular side of the membrane. Residues 262–283 (IFIVETICVAWFSLEFCLRFVQ) traverse the membrane as a helical segment. Over 284–294 (AQDKCQFFQGP) the chain is Cytoplasmic. The chain crosses the membrane as a helical span at residues 295–314 (LNIIDILAISPYYVSLAVSE). The Extracellular segment spans residues 315–328 (EPPEDGERPSGSSY). A helical; Voltage-sensor membrane pass occupies residues 329-353 (LEKVGLVLRVLRALRILYVMRLARH). Topologically, residues 354 to 368 (SLGLQTLGLTVRRCT) are cytoplasmic. A helical membrane pass occupies residues 369-390 (REFGLLLLFLAVAITLFSPLVY). The Extracellular segment spans residues 391–405 (VAEKESGRVLEFTSI). An intramembrane region (helical) is located at residues 406 to 417 (PASYWWAIISMT). A Selectivity filter motif is present at residues 418–423 (TVGYGD). The stretch at 418–425 (TVGYGDMV) is an intramembrane region. The Extracellular segment spans residues 426–432 (PRSVPGQ). The chain crosses the membrane as a helical span at residues 433 to 461 (MVALSSILSGILIMAFPATSIFHTFSHSY). Residues 462–519 (LELKKEQEQLQARLRHLQNTGPASECELLDPHVASEHELMNDVNDLILEGPALPIMHM) lie on the Cytoplasmic side of the membrane.

Belongs to the potassium channel family. G (TC 1.A.1.2) subfamily. Kv6.4/KCNG4 sub-subfamily. Heterotetramer with KCNB1. Does not form homomultimer. In terms of tissue distribution, highly expressed in brain, and at lower levels in liver, small intestine and colon.

Its subcellular location is the cell membrane. In terms of biological role, regulatory subunit of the voltage-gated potassium (Kv) channel which, when coassembled with KCNB1, modulates the kinetics parameters of the heterotetrameric channel namely the time course of activation, deactivation and inactivation and on the voltage-dependence of activation. Potassium channel subunit that does not form functional channels by itself. Reduces the deactivation rate. Modulates the threshold for activation by shifting by approximately 20 mV in hyperpolarizing direction. Markedly changes the inactivation by shifting the voltage dependence of inactivation by approximately 40 mV in hyperpolarizing direction. Acceleratee activation and enhances the time course of activation. The polypeptide is Voltage-gated potassium channel regulatory subunit KCNG4 (Homo sapiens (Human)).